A 464-amino-acid polypeptide reads, in one-letter code: Methylenetetrahydrofolate--tRNA-(uracil-5-)-methyltransferase TrmFO (464 aa).

Position 13–18 (13–18 (GGGLAG)) interacts with FAD.

The protein belongs to the MnmG family. TrmFO subfamily. Requires FAD as cofactor.

The protein localises to the cytoplasm. The catalysed reaction is uridine(54) in tRNA + (6R)-5,10-methylene-5,6,7,8-tetrahydrofolate + NADH + H(+) = 5-methyluridine(54) in tRNA + (6S)-5,6,7,8-tetrahydrofolate + NAD(+). It catalyses the reaction uridine(54) in tRNA + (6R)-5,10-methylene-5,6,7,8-tetrahydrofolate + NADPH + H(+) = 5-methyluridine(54) in tRNA + (6S)-5,6,7,8-tetrahydrofolate + NADP(+). Its function is as follows. Catalyzes the folate-dependent formation of 5-methyl-uridine at position 54 (M-5-U54) in all tRNAs. The chain is Methylenetetrahydrofolate--tRNA-(uracil-5-)-methyltransferase TrmFO from Bartonella bacilliformis (strain ATCC 35685 / KC583 / Herrer 020/F12,63).